Reading from the N-terminus, the 322-residue chain is Pilin gene-inverting protein (322 aa).

In terms of biological role, may be the site-specific invertase required for pilin gene inversion. Moraxella can express either a Q or I pilin; the inversion of 2 kb of DNA determines which pilin is expressed. The protein is Pilin gene-inverting protein (piv) of Moraxella bovis.